Reading from the N-terminus, the 485-residue chain is tRNA sulfurtransferase (485 aa).

One can recognise a THUMP domain in the interval Glu-61–Arg-165. Residues Leu-183–Ile-184, Lys-265, Gly-287, and Gln-296 contribute to the ATP site. Cys-344 and Cys-456 are joined by a disulfide. The region spanning Leu-404–Asn-483 is the Rhodanese domain. The Cysteine persulfide intermediate role is filled by Cys-456.

This sequence belongs to the ThiI family.

The protein resides in the cytoplasm. The enzyme catalyses [ThiI sulfur-carrier protein]-S-sulfanyl-L-cysteine + a uridine in tRNA + 2 reduced [2Fe-2S]-[ferredoxin] + ATP + H(+) = [ThiI sulfur-carrier protein]-L-cysteine + a 4-thiouridine in tRNA + 2 oxidized [2Fe-2S]-[ferredoxin] + AMP + diphosphate. It carries out the reaction [ThiS sulfur-carrier protein]-C-terminal Gly-Gly-AMP + S-sulfanyl-L-cysteinyl-[cysteine desulfurase] + AH2 = [ThiS sulfur-carrier protein]-C-terminal-Gly-aminoethanethioate + L-cysteinyl-[cysteine desulfurase] + A + AMP + 2 H(+). Its pathway is cofactor biosynthesis; thiamine diphosphate biosynthesis. Catalyzes the ATP-dependent transfer of a sulfur to tRNA to produce 4-thiouridine in position 8 of tRNAs, which functions as a near-UV photosensor. Also catalyzes the transfer of sulfur to the sulfur carrier protein ThiS, forming ThiS-thiocarboxylate. This is a step in the synthesis of thiazole, in the thiamine biosynthesis pathway. The sulfur is donated as persulfide by IscS. This Haemophilus influenzae (strain PittGG) protein is tRNA sulfurtransferase.